A 125-amino-acid chain; its full sequence is Small ribosomal subunit protein uS12 (125 aa).

A 3-methylthioaspartic acid modification is found at Asp89. The disordered stretch occupies residues 100 to 125; the sequence is GSLDTQGVQNRKQARSKYGAKRPKKA. The segment covering 111-125 has biased composition (basic residues); that stretch reads KQARSKYGAKRPKKA.

It belongs to the universal ribosomal protein uS12 family. Part of the 30S ribosomal subunit. Contacts proteins S8 and S17. May interact with IF1 in the 30S initiation complex.

Its function is as follows. With S4 and S5 plays an important role in translational accuracy. Interacts with and stabilizes bases of the 16S rRNA that are involved in tRNA selection in the A site and with the mRNA backbone. Located at the interface of the 30S and 50S subunits, it traverses the body of the 30S subunit contacting proteins on the other side and probably holding the rRNA structure together. The combined cluster of proteins S8, S12 and S17 appears to hold together the shoulder and platform of the 30S subunit. This is Small ribosomal subunit protein uS12 from Thioalkalivibrio sulfidiphilus (strain HL-EbGR7).